The chain runs to 306 residues: Agmatinase (306 aa).

His-126, Asp-149, His-151, Asp-153, Asp-230, and Asp-232 together coordinate Mn(2+).

It belongs to the arginase family. Agmatinase subfamily. Requires Mn(2+) as cofactor.

It catalyses the reaction agmatine + H2O = urea + putrescine. It participates in amine and polyamine biosynthesis; putrescine biosynthesis via agmatine pathway; putrescine from agmatine: step 1/1. In terms of biological role, catalyzes the formation of putrescine from agmatine. The protein is Agmatinase of Salmonella agona (strain SL483).